The chain runs to 228 residues: Superoxide dismutase [Mn] (228 aa).

Positions 1 to 23 (MTRSLKTTLILLASSVISMSALA) are cleaved as a signal peptide. His49, His100, Asp188, and His192 together coordinate Mn(2+).

Belongs to the iron/manganese superoxide dismutase family. Mn(2+) serves as cofactor.

Its subcellular location is the periplasm. The catalysed reaction is 2 superoxide + 2 H(+) = H2O2 + O2. In terms of biological role, destroys superoxide anion radicals which are normally produced within the cells and which are toxic to biological systems. The chain is Superoxide dismutase [Mn] (sodA) from Acinetobacter baylyi (strain ATCC 33305 / BD413 / ADP1).